We begin with the raw amino-acid sequence, 111 residues long: Nucleoid-associated protein Teth514_0034 (111 aa).

Belongs to the YbaB/EbfC family. Homodimer.

It localises to the cytoplasm. The protein resides in the nucleoid. Binds to DNA and alters its conformation. May be involved in regulation of gene expression, nucleoid organization and DNA protection. This Thermoanaerobacter sp. (strain X514) protein is Nucleoid-associated protein Teth514_0034.